Consider the following 315-residue polypeptide: MTFSNNFHRLETRLQSQVGRAIGDFNMIEDGDTILVCLSGGKDSYTMLSVLMALQKRAPVDFKLIAMNLDQKQPGFPEEVLPNYLKKLGVEYVIVEADTYSIVKEKVPEGKTTCSLCSRLRRGVIYRTAKELGANKIALGHHRDDIVNTFFLNMFFGGKMKSMPPKLATDNGDHIVIRPLAYCAEKDIASYARAMEFPIIPCNLCGSQENLQRKKVKEMLLEWERQTPGRIDNIFASLRNVVPSHLADTDLFDFNGLTTGLAKIGEDALFGQTAYDQAPLVFAGSHDDRIEFVRFERKPGDKSAEQAVPGEAAAN.

The PP-loop motif signature appears at 39–44; that stretch reads SGGKDS. [4Fe-4S] cluster contacts are provided by C114, C117, and C205.

This sequence belongs to the TtcA family. Homodimer. It depends on Mg(2+) as a cofactor. [4Fe-4S] cluster serves as cofactor.

The protein localises to the cytoplasm. It carries out the reaction cytidine(32) in tRNA + S-sulfanyl-L-cysteinyl-[cysteine desulfurase] + AH2 + ATP = 2-thiocytidine(32) in tRNA + L-cysteinyl-[cysteine desulfurase] + A + AMP + diphosphate + H(+). It functions in the pathway tRNA modification. Functionally, catalyzes the ATP-dependent 2-thiolation of cytidine in position 32 of tRNA, to form 2-thiocytidine (s(2)C32). The sulfur atoms are provided by the cysteine/cysteine desulfurase (IscS) system. This is tRNA-cytidine(32) 2-sulfurtransferase from Ralstonia pickettii (strain 12J).